The sequence spans 304 residues: Putative S-adenosyl-L-methionine-dependent methyltransferase MMAR_1057 (304 aa).

S-adenosyl-L-methionine contacts are provided by residues D130 and 159 to 160; that span reads DL.

Belongs to the UPF0677 family.

Exhibits S-adenosyl-L-methionine-dependent methyltransferase activity. This is Putative S-adenosyl-L-methionine-dependent methyltransferase MMAR_1057 from Mycobacterium marinum (strain ATCC BAA-535 / M).